We begin with the raw amino-acid sequence, 99 residues long: NADH-ubiquinone oxidoreductase chain 4L (99 aa).

3 consecutive transmembrane segments (helical) span residues 5–25 (IITA…GFII), 30–50 (ILLL…IIIC), and 65–85 (LYIL…LVLF).

It belongs to the complex I subunit 4L family.

Its subcellular location is the mitochondrion membrane. The catalysed reaction is a ubiquinone + NADH + 5 H(+)(in) = a ubiquinol + NAD(+) + 4 H(+)(out). In terms of biological role, core subunit of the mitochondrial membrane respiratory chain NADH dehydrogenase (Complex I) that is believed to belong to the minimal assembly required for catalysis. Complex I functions in the transfer of electrons from NADH to the respiratory chain. The immediate electron acceptor for the enzyme is believed to be ubiquinone. The sequence is that of NADH-ubiquinone oxidoreductase chain 4L (ND4L) from Allomyces macrogynus.